We begin with the raw amino-acid sequence, 319 residues long: 1-aminocyclopropane-1-carboxylate oxidase 4 (319 aa).

Positions proline 153–proline 253 constitute a Fe2OG dioxygenase domain. Fe cation-binding residues include histidine 177, aspartate 179, and histidine 234.

This sequence belongs to the iron/ascorbate-dependent oxidoreductase family. It depends on Fe cation as a cofactor.

The enzyme catalyses 1-aminocyclopropane-1-carboxylate + L-ascorbate + O2 = ethene + L-dehydroascorbate + hydrogen cyanide + CO2 + 2 H2O. The protein operates within alkene biosynthesis; ethylene biosynthesis via S-adenosyl-L-methionine; ethylene from S-adenosyl-L-methionine: step 2/2. This is 1-aminocyclopropane-1-carboxylate oxidase 4 (ACO4) from Petunia hybrida (Petunia).